A 166-amino-acid polypeptide reads, in one-letter code: uncharacterized protein (166 aa).

3 stretches are compositionally biased toward basic and acidic residues: residues 1–13 (MAEV…EHNS), 21–112 (KAND…KTKE), and 119–137 (DNVE…KEGG). Positions 1-144 (MAEVSKKRCE…EGGSKAWNKT (144 aa)) are disordered. 8 tandem repeats follow at residues 31 to 41 (DKTKETAGSAK), 42 to 52 (DKTKETAGSAK), 53 to 63 (DKTKETAESAK), 64 to 74 (DKTKETAGSAK), 75 to 85 (DKTKETAESAK), 86 to 96 (DKTKETAGSAK), 97 to 107 (DKTKETAESAK), and 108 to 118 (DKTKETAGNVR). The tract at residues 31–118 (DKTKETAGSA…KTKETAGNVR (88 aa)) is 8 X 11 AA approximate tandem repeats of D-K-T-K-E-T-A-G/E-S-A-K.

This sequence belongs to the LEA type 1 family.

This is an uncharacterized protein from Encephalitozoon cuniculi (strain GB-M1) (Microsporidian parasite).